The following is a 277-amino-acid chain: Probable cytochrome c oxidase subunit 3 (277 aa).

A run of 6 helical transmembrane segments spans residues 20-40 (PWPI…VSFM), 45-65 (FNHY…YSWW), 88-108 (IGMA…FASF), 173-193 (CVTA…MQAY), 211-231 (FYLA…FLIV), and 255-275 (AWYW…VYIF).

It belongs to the cytochrome c oxidase subunit 3 family.

Its subcellular location is the cell membrane. It catalyses the reaction 4 Fe(II)-[cytochrome c] + O2 + 8 H(+)(in) = 4 Fe(III)-[cytochrome c] + 2 H2O + 4 H(+)(out). This chain is Probable cytochrome c oxidase subunit 3 (ctaE), found in Rickettsia bellii (strain RML369-C).